The sequence spans 139 residues: Large ribosomal subunit protein uL16 (139 aa).

Basic residues predominate over residues M1 to G19. The disordered stretch occupies residues M1–T25.

The protein belongs to the universal ribosomal protein uL16 family. Part of the 50S ribosomal subunit.

Functionally, binds 23S rRNA and is also seen to make contacts with the A and possibly P site tRNAs. In Streptomyces griseus subsp. griseus (strain JCM 4626 / CBS 651.72 / NBRC 13350 / KCC S-0626 / ISP 5235), this protein is Large ribosomal subunit protein uL16.